The following is a 491-amino-acid chain: Aspartyl/glutamyl-tRNA(Asn/Gln) amidotransferase subunit B (491 aa).

Belongs to the GatB/GatE family. GatB subfamily. As to quaternary structure, heterotrimer of A, B and C subunits.

It catalyses the reaction L-glutamyl-tRNA(Gln) + L-glutamine + ATP + H2O = L-glutaminyl-tRNA(Gln) + L-glutamate + ADP + phosphate + H(+). The catalysed reaction is L-aspartyl-tRNA(Asn) + L-glutamine + ATP + H2O = L-asparaginyl-tRNA(Asn) + L-glutamate + ADP + phosphate + 2 H(+). Its function is as follows. Allows the formation of correctly charged Asn-tRNA(Asn) or Gln-tRNA(Gln) through the transamidation of misacylated Asp-tRNA(Asn) or Glu-tRNA(Gln) in organisms which lack either or both of asparaginyl-tRNA or glutaminyl-tRNA synthetases. The reaction takes place in the presence of glutamine and ATP through an activated phospho-Asp-tRNA(Asn) or phospho-Glu-tRNA(Gln). The sequence is that of Aspartyl/glutamyl-tRNA(Asn/Gln) amidotransferase subunit B from Paraburkholderia phymatum (strain DSM 17167 / CIP 108236 / LMG 21445 / STM815) (Burkholderia phymatum).